Here is a 685-residue protein sequence, read N- to C-terminus: Probable transcriptional regulator SLK3 (685 aa).

2 disordered regions span residues 25–66 and 108–129; these read NLPG…ENSY and LQQQ…SQRL. Over residues 39–56 the composition is skewed to low complexity; it reads QHLPQQQQRQLLEQQAGQ. Residues 176–423 form a dimerization region; sequence PAENCITYWR…EHKVGPLEGL (248 aa). The Nuclear localization signal motif lies at 185–199; that stretch reads RKFVAEYFSPRAKQR. Polar residues predominate over residues 447-459; that stretch reads GNSGAMSGPAQAQ. Disordered stretches follow at residues 447–491, 512–591, and 611–658; these read GNSG…MNGS, NNQN…NTQE, and QQQA…NNLP. A compositionally biased stretch (low complexity) spans 460-471; that stretch reads MTLSSGTMSGST. Positions 512–524 are enriched in polar residues; the sequence is NNQNSNTGNQEGF. Low complexity predominate over residues 525-543; the sequence is SSQNPTLNSNQSPSSSSQQ. Composition is skewed to polar residues over residues 544 to 588, 611 to 636, and 645 to 658; these read RENL…SHGN, QQQA…TSNI, and RINS…NNLP.

This sequence belongs to the adn1/SEU family.

Its subcellular location is the nucleus. Probable transcription regulator that functions in the development of the carpel margin meristem similarly to SEUSS (SEU). In association with SEU, supports organ development from meristematic regions by facilitating auxin response and thus organ initiation, and by sustaining meristematic potential through the maintenance of PHABULOSA expression. The protein is Probable transcriptional regulator SLK3 (SLK3) of Arabidopsis thaliana (Mouse-ear cress).